The following is a 170-amino-acid chain: Thialysine N-epsilon-acetyltransferase (170 aa).

In terms of domain architecture, N-acetyltransferase spans 4–166 (VMIREAKEGD…FRFEGEAMRE (163 aa)). Residue 27-28 (YE) coordinates substrate. Lys29 carries the N6-acetyllysine modification. Glu92 contributes to the substrate binding site. Residues 94 to 96 (IYV), 102 to 107 (GQGIGS), 133 to 135 (NKR), and Tyr140 each bind acetyl-CoA. The active-site Proton donor is Tyr140. Residue Glu152 coordinates substrate.

This sequence belongs to the acetyltransferase family. In terms of assembly, homodimer.

The protein localises to the cytoplasm. The catalysed reaction is S-(2-aminoethyl)-L-cysteine + acetyl-CoA = S-(2-acetamidoethyl)-L-cysteine + CoA + H(+). It catalyses the reaction an alkane-alpha,omega-diamine + acetyl-CoA = an N-acetylalkane-alpha,omega-diamine + CoA + H(+). In terms of biological role, catalyzes the N-acetylation of the amino acid thialysine (S-(2-aminoethyl)-L-cysteine), a L-lysine analog with the 4-methylene group substituted with a sulfur. May also catalyze acetylation of polyamines, such as norspermidine, spermidine or spermine. However, ability to acetylate polyamines is weak, suggesting that it does not act as a diamine acetyltransferase in vivo. The polypeptide is Thialysine N-epsilon-acetyltransferase (Bos taurus (Bovine)).